The primary structure comprises 219 residues: Proteasome subunit beta type-9 (219 aa).

Residues 1 to 20 (MLRAGAPTAGSFRTEEVHTG) constitute a propeptide, removed in mature form. Thr21 acts as the Nucleophile in catalysis. N6-acetyllysine is present on residues Lys53 and Lys109.

Belongs to the peptidase T1B family. The 26S proteasome consists of a 20S proteasome core and two 19S regulatory subunits. The 20S proteasome core is composed of 28 subunits that are arranged in four stacked rings, resulting in a barrel-shaped structure. The two end rings are each formed by seven alpha subunits, and the two central rings are each formed by seven beta subunits. The catalytic chamber with the active sites is on the inside of the barrel. Component of the immunoproteasome, where it displaces the equivalent housekeeping subunit PSMB6. Component of the spermatoproteasome, a form of the proteasome specifically found in testis. Autocleaved. The resulting N-terminal Thr residue of the mature subunit is responsible for the nucleophile proteolytic activity.

The protein resides in the cytoplasm. Its subcellular location is the nucleus. The enzyme catalyses Cleavage of peptide bonds with very broad specificity.. In terms of biological role, the proteasome is a multicatalytic proteinase complex which is characterized by its ability to cleave peptides with Arg, Phe, Tyr, Leu, and Glu adjacent to the leaving group at neutral or slightly basic pH. The proteasome has an ATP-dependent proteolytic activity. This subunit is involved in antigen processing to generate class I binding peptides. This is Proteasome subunit beta type-9 (Psmb9) from Mus terricolor (Earth-colored mouse).